A 261-amino-acid chain; its full sequence is Ribosomal RNA small subunit methyltransferase J (261 aa).

Residues 111-112 (RD), 127-128 (ER), 163-164 (SS), and D181 each bind S-adenosyl-L-methionine.

The protein belongs to the methyltransferase superfamily. RsmJ family.

The protein localises to the cytoplasm. The enzyme catalyses guanosine(1516) in 16S rRNA + S-adenosyl-L-methionine = N(2)-methylguanosine(1516) in 16S rRNA + S-adenosyl-L-homocysteine + H(+). Functionally, specifically methylates the guanosine in position 1516 of 16S rRNA. The protein is Ribosomal RNA small subunit methyltransferase J of Shewanella sp. (strain MR-7).